Consider the following 91-residue polypeptide: Signal recognition particle 19 kDa protein (91 aa).

Belongs to the SRP19 family. In terms of assembly, part of the signal recognition particle protein translocation system, which is composed of SRP and FtsY. Archaeal SRP consists of a 7S RNA molecule of 300 nucleotides and two protein subunits: SRP54 and SRP19.

It localises to the cytoplasm. Involved in targeting and insertion of nascent membrane proteins into the cytoplasmic membrane. Binds directly to 7S RNA and mediates binding of the 54 kDa subunit of the SRP. The polypeptide is Signal recognition particle 19 kDa protein (Methanothermobacter thermautotrophicus (strain ATCC 29096 / DSM 1053 / JCM 10044 / NBRC 100330 / Delta H) (Methanobacterium thermoautotrophicum)).